Consider the following 63-residue polypeptide: Putative antitoxin AF_1084 (63 aa).

It belongs to the UPF0165 family.

In terms of biological role, possibly the antitoxin component of a type II toxin-antitoxin (TA) system. This is Putative antitoxin AF_1084 from Archaeoglobus fulgidus (strain ATCC 49558 / DSM 4304 / JCM 9628 / NBRC 100126 / VC-16).